A 259-amino-acid chain; its full sequence is tRNA (guanine-N(7)-)-methyltransferase (259 aa).

The disordered stretch occupies residues 1-73 (MGHHGQMHAQ…GPAEDPDRPG (73 aa)). S-adenosyl-L-methionine is bound by residues Glu91, Glu116, Asn143, and Asp166. Asp166 is an active-site residue. Substrate is bound by residues Lys170, Asp202, and 238 to 241 (TKYE).

It belongs to the class I-like SAM-binding methyltransferase superfamily. TrmB family.

It catalyses the reaction guanosine(46) in tRNA + S-adenosyl-L-methionine = N(7)-methylguanosine(46) in tRNA + S-adenosyl-L-homocysteine. It functions in the pathway tRNA modification; N(7)-methylguanine-tRNA biosynthesis. Its function is as follows. Catalyzes the formation of N(7)-methylguanine at position 46 (m7G46) in tRNA. The sequence is that of tRNA (guanine-N(7)-)-methyltransferase from Mycolicibacterium paratuberculosis (strain ATCC BAA-968 / K-10) (Mycobacterium paratuberculosis).